Reading from the N-terminus, the 555-residue chain is Dimethylaniline monooxygenase [N-oxide-forming] 4 (555 aa).

FAD-binding positions include 9-13 (GAGVS), E32, and 40-41 (LW). NADP(+)-binding positions include 60–61 (TN) and 195–198 (SGGD). Residues 515–532 (YLKVWGAPLLLASVLLIC) form a helical membrane-spanning segment.

It belongs to the FMO family. Requires FAD as cofactor. Kidney and liver.

The protein localises to the microsome membrane. It localises to the endoplasmic reticulum membrane. It carries out the reaction N,N-dimethylaniline + NADPH + O2 + H(+) = N,N-dimethylaniline N-oxide + NADP(+) + H2O. Its function is as follows. This protein is involved in the oxidative metabolism of a variety of xenobiotics such as drugs and pesticides. This is Dimethylaniline monooxygenase [N-oxide-forming] 4 (FMO4) from Oryctolagus cuniculus (Rabbit).